The primary structure comprises 251 residues: uncharacterized protein (251 aa).

Transmembrane regions (helical) follow at residues 56 to 76 (LAVV…TLVA), 104 to 124 (IITV…FLLT), 184 to 204 (HGFV…LIIV), and 208 to 228 (YLIA…ANIS).

The protein localises to the membrane. This is an uncharacterized protein from Caenorhabditis elegans.